The following is an 86-amino-acid chain: Anti-adapter protein IraP (86 aa).

Residues 1–38 are a coiled coil; that stretch reads MKNLIAELLVKLAQKEEEAKELTVQVEALEIVVTALLR.

Belongs to the IraP family. Interacts with RssB.

The protein resides in the cytoplasm. Functionally, inhibits RpoS proteolysis by regulating RssB activity, thereby increasing the stability of the sigma stress factor RpoS especially during phosphate starvation, but also in stationary phase and during nitrogen starvation. Its effect on RpoS stability is due to its interaction with RssB, which probably blocks the interaction of RssB with RpoS, and the consequent delivery of the RssB-RpoS complex to the ClpXP protein degradation pathway. This chain is Anti-adapter protein IraP, found in Klebsiella pneumoniae subsp. pneumoniae (strain ATCC 700721 / MGH 78578).